The chain runs to 177 residues: R-phycoerythrin beta chain (177 aa).

The phycourobilin site is built by Cys-50 and Cys-61. Asn-72 bears the N4-methylasparagine mark. 2 residues coordinate (2R,3E)-phycoerythrobilin: Cys-82 and Cys-158.

Belongs to the phycobiliprotein family. As to quaternary structure, heterodimer of an alpha and a beta chain. In terms of processing, contains two covalently linked phycoerythrobilin chromophores and one covalently linked phycourobilin chromophore.

It localises to the plastid. Its subcellular location is the chloroplast thylakoid membrane. Light-harvesting photosynthetic bile pigment-protein from the phycobiliprotein complex. The sequence is that of R-phycoerythrin beta chain (cpeB) from Lophosiphonia boldii (Red alga).